Reading from the N-terminus, the 38-residue chain is Photosystem II reaction center protein L (38 aa).

The chain crosses the membrane as a helical span at residues 17–37; sequence SLYWGLLLIFVLAVLFSNYFF.

The protein belongs to the PsbL family. In terms of assembly, PSII is composed of 1 copy each of membrane proteins PsbA, PsbB, PsbC, PsbD, PsbE, PsbF, PsbH, PsbI, PsbJ, PsbK, PsbL, PsbM, PsbT, PsbX, PsbY, PsbZ, Psb30/Ycf12, at least 3 peripheral proteins of the oxygen-evolving complex and a large number of cofactors. It forms dimeric complexes.

It is found in the plastid. Its subcellular location is the chloroplast thylakoid membrane. Its function is as follows. One of the components of the core complex of photosystem II (PSII). PSII is a light-driven water:plastoquinone oxidoreductase that uses light energy to abstract electrons from H(2)O, generating O(2) and a proton gradient subsequently used for ATP formation. It consists of a core antenna complex that captures photons, and an electron transfer chain that converts photonic excitation into a charge separation. This subunit is found at the monomer-monomer interface and is required for correct PSII assembly and/or dimerization. In Angiopteris evecta (Mule's foot fern), this protein is Photosystem II reaction center protein L.